A 225-amino-acid polypeptide reads, in one-letter code: Ribonuclease 3 (225 aa).

The 123-residue stretch at 5–127 (VTELYKTIDY…IIGAVFLDSD (123 aa)) folds into the RNase III domain. Glutamate 40 contributes to the Mg(2+) binding site. Aspartate 44 is a catalytic residue. Mg(2+) contacts are provided by aspartate 113 and glutamate 116. Residue glutamate 116 is part of the active site. The region spanning 154–223 (DPKTLLQEHL…AEKALKILKN (70 aa)) is the DRBM domain.

It belongs to the ribonuclease III family. As to quaternary structure, homodimer. Mg(2+) is required as a cofactor.

It localises to the cytoplasm. The catalysed reaction is Endonucleolytic cleavage to 5'-phosphomonoester.. Functionally, digests double-stranded RNA. Involved in the processing of primary rRNA transcript to yield the immediate precursors to the large and small rRNAs (23S and 16S). Processes some mRNAs, and tRNAs when they are encoded in the rRNA operon. Processes pre-crRNA and tracrRNA of type II CRISPR loci if present in the organism. The chain is Ribonuclease 3 from Pseudoalteromonas translucida (strain TAC 125).